A 357-amino-acid chain; its full sequence is UDP-N-acetylglucosamine 2-epimerase homolog (357 aa).

The protein belongs to the UDP-N-acetylglucosamine 2-epimerase family.

The chain is UDP-N-acetylglucosamine 2-epimerase homolog from Methanococcus maripaludis (strain DSM 14266 / JCM 13030 / NBRC 101832 / S2 / LL).